The following is a 65-amino-acid chain: Large ribosomal subunit protein bL35c (65 aa).

The segment covering 25 to 44 has biased composition (basic residues); it reads HKASKSHLLQKKSSKQRRHL. Positions 25-45 are disordered; that stretch reads HKASKSHLLQKKSSKQRRHLS.

Belongs to the bacterial ribosomal protein bL35 family.

It localises to the plastid. The protein localises to the chloroplast. This is Large ribosomal subunit protein bL35c from Pyropia yezoensis (Susabi-nori).